Consider the following 294-residue polypeptide: Metallophosphoesterase MPPED2 (294 aa).

Mn(2+)-binding residues include D65, H67, D86, N117, and H213. GMP is bound at residue 117–118 (NH). Residues 225–226 (KE) and 252–255 (GIHE) each bind GMP. H254 contacts Mn(2+).

The protein belongs to the UPF0046 family. As to quaternary structure, homodimer. It depends on Mn(2+) as a cofactor. The cofactor is Co(2+). Expressed predominantly in fetal brain.

Inhibited by nmolar levels of AMP and GMP. Its function is as follows. Displays low metallophosphoesterase activity (in vitro). May play a role in the development of the nervous system. This is Metallophosphoesterase MPPED2 (MPPED2) from Homo sapiens (Human).